Reading from the N-terminus, the 515-residue chain is Aldehyde dehydrogenase (515 aa).

Residues 1-12 (MTVAEQQPQHQG) are compositionally biased toward polar residues. The disordered stretch occupies residues 1–20 (MTVAEQQPQHQGYANPGTPG). 228-234 (GFGLEAG) provides a ligand contact to NAD(+). Active-site residues include Glu272 and Cys311.

It belongs to the aldehyde dehydrogenase family.

The enzyme catalyses an aldehyde + NAD(+) + H2O = a carboxylate + NADH + 2 H(+). The chain is Aldehyde dehydrogenase (aldA) from Deinococcus radiodurans (strain ATCC 13939 / DSM 20539 / JCM 16871 / CCUG 27074 / LMG 4051 / NBRC 15346 / NCIMB 9279 / VKM B-1422 / R1).